Consider the following 122-residue polypeptide: Ribosome-binding factor A (122 aa).

The protein belongs to the RbfA family. Monomer. Binds 30S ribosomal subunits, but not 50S ribosomal subunits or 70S ribosomes.

The protein localises to the cytoplasm. Functionally, one of several proteins that assist in the late maturation steps of the functional core of the 30S ribosomal subunit. Associates with free 30S ribosomal subunits (but not with 30S subunits that are part of 70S ribosomes or polysomes). Required for efficient processing of 16S rRNA. May interact with the 5'-terminal helix region of 16S rRNA. This chain is Ribosome-binding factor A, found in Pelagibacter ubique (strain HTCC1062).